The chain runs to 370 residues: Actin-related protein 2/3 complex subunit 1A-B (370 aa).

6 WD repeats span residues 6-45 (FLLEPITCHAWNKDLTQIAISPNNHEVHIYKNSGNQWVKC), 50-89 (EHNGHITGIDWAPKSDRIVTCGADRNAYVWSQKDGVWKPT), 140-179 (PIRSTVLSLDWHPNNVLLAAGSCDFKTRVFSAYIKEVDEK), 202-241 (SSGGWVHSVSFSASGNKLAWVSHDSTVSVADASKNMSVSQ), 244-284 (TEFL…TFVS), and 322-365 (LHQN…SYIQ).

Belongs to the WD repeat ARPC1 family. Component of the Arp2/3 complex.

The protein localises to the cytoplasm. It localises to the cytoskeleton. Its subcellular location is the nucleus. Its function is as follows. Probably functions as a component of the Arp2/3 complex which is involved in regulation of actin polymerization and together with an activating nucleation-promoting factor (NPF) mediates the formation of branched actin networks. In addition to its role in the cytoplasmic cytoskeleton, the Arp2/3 complex also promotes actin polymerization in the nucleus, thereby regulating gene transcription and repair of damaged DNA. In Xenopus laevis (African clawed frog), this protein is Actin-related protein 2/3 complex subunit 1A-B (arpc1a-b).